A 124-amino-acid polypeptide reads, in one-letter code: Tax1-binding protein 3 homolog (124 aa).

One can recognise a PDZ domain in the interval 18 to 106 (AVELHKQEVI…DRAVKFIKQS (89 aa)).

May regulate a number of protein-protein interactions by competing for PDZ domain binding sites. The chain is Tax1-binding protein 3 homolog from Caenorhabditis elegans.